A 587-amino-acid polypeptide reads, in one-letter code: Zinc finger protein 496 (587 aa).

Residues methionine 1–serine 40 are disordered. Residues alanine 11–lysine 20 are compositionally biased toward basic and acidic residues. Lysine 13 participates in a covalent cross-link: Glycyl lysine isopeptide (Lys-Gly) (interchain with G-Cter in SUMO2). Positions arginine 42 to proline 124 constitute an SCAN box domain. Serine 185 carries the phosphoserine modification. Residues serine 221–valine 291 form the KRAB domain. The segment at proline 260 to glutamate 282 is disordered. A Phosphoserine modification is found at serine 299. The disordered stretch occupies residues serine 358–valine 399. A compositionally biased stretch (polar residues) spans histidine 389–valine 399. Lysine 403 participates in a covalent cross-link: Glycyl lysine isopeptide (Lys-Gly) (interchain with G-Cter in SUMO2). The C2H2-type 1; degenerate zinc finger occupies tyrosine 406–arginine 428. C2H2-type zinc fingers lie at residues histidine 435–histidine 457 and tyrosine 463–histidine 485. The tract at residues proline 488–leucine 513 is disordered. Lysine 496 participates in a covalent cross-link: Glycyl lysine isopeptide (Lys-Gly) (interchain with G-Cter in SUMO2). C2H2-type zinc fingers lie at residues phenylalanine 522–histidine 545 and phenylalanine 553–histidine 575.

The protein belongs to the krueppel C2H2-type zinc-finger protein family. Interacts (via zinc-fingers) with JARID2. Interacts with NSD1.

The protein localises to the nucleus. Its function is as follows. DNA-binding transcription factor that can both act as an activator and a repressor. The polypeptide is Zinc finger protein 496 (ZNF496) (Homo sapiens (Human)).